Consider the following 304-residue polypeptide: Homoserine kinase (304 aa).

An ATP-binding site is contributed by 90–100 (PLARGLGSSAS).

This sequence belongs to the GHMP kinase family. Homoserine kinase subfamily.

The protein resides in the cytoplasm. It carries out the reaction L-homoserine + ATP = O-phospho-L-homoserine + ADP + H(+). Its pathway is amino-acid biosynthesis; L-threonine biosynthesis; L-threonine from L-aspartate: step 4/5. Catalyzes the ATP-dependent phosphorylation of L-homoserine to L-homoserine phosphate. The sequence is that of Homoserine kinase from Staphylococcus aureus (strain MRSA252).